The sequence spans 138 residues: 10 kDa chaperonin 1, chloroplastic (138 aa).

Residues 1–61 constitute a chloroplast transit peptide; sequence MASSFITVPK…VPQADRVLVR (61 aa). The cpn-10 domain stretch occupies residues 50–137; sequence KVVPQADRVL…CKESDLLAIV (88 aa).

Belongs to the GroES chaperonin family. As to expression, expressed at low levels in germinating seeds, seedlings, rosettes leaves, flowers and siliques.

The protein resides in the plastid. It is found in the chloroplast. Functions as a co-chaperone for protein folding in chloroplasts. The protein is 10 kDa chaperonin 1, chloroplastic of Arabidopsis thaliana (Mouse-ear cress).